A 656-amino-acid polypeptide reads, in one-letter code: Bifunctional protein ThiO/ThiG (656 aa).

Positions 1–395 (MQTTSDVLII…HAAENSEGSK (395 aa)) are thiO. Residues 7–21 (VLII…AIAV) and 48–50 (AGM) each bind FAD. A glycine-binding site is contributed by Glu-56. Residue Val-169 coordinates FAD. Glycine contacts are provided by Arg-298 and Arg-324. 322–328 (HYRNGIL) is a binding site for FAD. The interval 396–656 (DLLEIAGRKF…ASSPLTGLVG (261 aa)) is thiG. Lys-498 (schiff-base intermediate with DXP) is an active-site residue. 1-deoxy-D-xylulose 5-phosphate contacts are provided by residues Gly-559, 585-586 (AG), and 607-608 (NS).

It in the N-terminal section; belongs to the DAO family. ThiO subfamily. This sequence in the C-terminal section; belongs to the ThiG family. Interacts with ThiH and ThiS. FAD serves as cofactor.

The protein localises to the cytoplasm. The catalysed reaction is glycine + O2 + H2O = glyoxylate + H2O2 + NH4(+). The enzyme catalyses [ThiS sulfur-carrier protein]-C-terminal-Gly-aminoethanethioate + 2-iminoacetate + 1-deoxy-D-xylulose 5-phosphate = [ThiS sulfur-carrier protein]-C-terminal Gly-Gly + 2-[(2R,5Z)-2-carboxy-4-methylthiazol-5(2H)-ylidene]ethyl phosphate + 2 H2O + H(+). The protein operates within cofactor biosynthesis; thiamine diphosphate biosynthesis. In terms of biological role, catalyzes the FAD-dependent oxidative deamination of glycine. Is essential for thiamine biosynthesis since the oxidation of glycine catalyzed by ThiO generates the glycine imine intermediate (dehydroglycine) required for the biosynthesis of the thiazole ring of thiamine pyrophosphate. Its function is as follows. Catalyzes the rearrangement of 1-deoxy-D-xylulose 5-phosphate (DXP) to produce the thiazole phosphate moiety of thiamine. Sulfur is provided by the thiocarboxylate moiety of the carrier protein ThiS. In vitro, sulfur can be provided by H(2)S. This is Bifunctional protein ThiO/ThiG (thiO/thiG) from Synechocystis sp. (strain ATCC 27184 / PCC 6803 / Kazusa).